A 467-amino-acid polypeptide reads, in one-letter code: UDP-N-acetylmuramoylalanine--D-glutamate ligase (467 aa).

Residue 121–127 (GTNGKST) coordinates ATP.

The protein belongs to the MurCDEF family.

It is found in the cytoplasm. The enzyme catalyses UDP-N-acetyl-alpha-D-muramoyl-L-alanine + D-glutamate + ATP = UDP-N-acetyl-alpha-D-muramoyl-L-alanyl-D-glutamate + ADP + phosphate + H(+). The protein operates within cell wall biogenesis; peptidoglycan biosynthesis. Cell wall formation. Catalyzes the addition of glutamate to the nucleotide precursor UDP-N-acetylmuramoyl-L-alanine (UMA). The protein is UDP-N-acetylmuramoylalanine--D-glutamate ligase of Brucella abortus (strain 2308).